Reading from the N-terminus, the 265-residue chain is Isoprenyl transferase (265 aa).

D35 is a catalytic residue. Residue D35 participates in Mg(2+) binding. Residues 36-39 (GNGR), W40, R48, H52, and 80-82 (STE) contribute to the substrate site. The Proton acceptor role is filled by N83. Residues W84, R86, R203, and 209–211 (RIS) each bind substrate. E222 is a binding site for Mg(2+).

This sequence belongs to the UPP synthase family. In terms of assembly, homodimer. Requires Mg(2+) as cofactor.

Its function is as follows. Catalyzes the condensation of isopentenyl diphosphate (IPP) with allylic pyrophosphates generating different type of terpenoids. The protein is Isoprenyl transferase of Prochlorococcus marinus (strain MIT 9313).